We begin with the raw amino-acid sequence, 294 residues long: 4-hydroxy-tetrahydrodipicolinate synthase (294 aa).

Thr-47 contributes to the pyruvate binding site. Tyr-135 (proton donor/acceptor) is an active-site residue. Lys-163 serves as the catalytic Schiff-base intermediate with substrate. Residue Val-205 participates in pyruvate binding.

Belongs to the DapA family. In terms of assembly, homotetramer; dimer of dimers.

The protein resides in the cytoplasm. It carries out the reaction L-aspartate 4-semialdehyde + pyruvate = (2S,4S)-4-hydroxy-2,3,4,5-tetrahydrodipicolinate + H2O + H(+). The protein operates within amino-acid biosynthesis; L-lysine biosynthesis via DAP pathway; (S)-tetrahydrodipicolinate from L-aspartate: step 3/4. In terms of biological role, catalyzes the condensation of (S)-aspartate-beta-semialdehyde [(S)-ASA] and pyruvate to 4-hydroxy-tetrahydrodipicolinate (HTPA). This Rickettsia bellii (strain OSU 85-389) protein is 4-hydroxy-tetrahydrodipicolinate synthase.